We begin with the raw amino-acid sequence, 457 residues long: Reticulon-like protein B18 (457 aa).

The tract at residues 94–183 is disordered; it reads AAVTARRSKT…SPSSDQPQDV (90 aa). Residues 124–136 are compositionally biased toward basic and acidic residues; sequence LRSEAMVDTKENT. A compositionally biased stretch (basic residues) spans 149–163; that stretch reads NQRKQKKLGRSKKEK. The segment covering 166 to 183 has biased composition (low complexity); sequence SVPLLASPSPSSDQPQDV. The Reticulon domain occupies 195-385; that stretch reads ISDLIMWRDV…AFWNLTSLKT (191 aa). The next 4 helical transmembrane spans lie at 208–228, 230–250, 314–334, and 377–397; these read TLWF…AKGF, FSVF…SFLS, YGYL…SFTI, and FWNL…VVVI. The segment at 407-457 is disordered; sequence DSEDEEEKKQQEKTHPEQQKSPEDKSTSPRSAEEEQALVLVAETKAPKKLY. Residues 413–439 show a composition bias toward basic and acidic residues; it reads EKKQQEKTHPEQQKSPEDKSTSPRSAE.

It localises to the endoplasmic reticulum membrane. The protein is Reticulon-like protein B18 (RTNLB18) of Arabidopsis thaliana (Mouse-ear cress).